Consider the following 201-residue polypeptide: Potassium-transporting ATPase KdpC subunit (201 aa).

The chain crosses the membrane as a helical span at residues 7 to 29; the sequence is PALVLLTALTAITGLAYPLAMTG.

It belongs to the KdpC family. As to quaternary structure, the system is composed of three essential subunits: KdpA, KdpB and KdpC.

Its subcellular location is the cell inner membrane. Its function is as follows. Part of the high-affinity ATP-driven potassium transport (or Kdp) system, which catalyzes the hydrolysis of ATP coupled with the electrogenic transport of potassium into the cytoplasm. This subunit acts as a catalytic chaperone that increases the ATP-binding affinity of the ATP-hydrolyzing subunit KdpB by the formation of a transient KdpB/KdpC/ATP ternary complex. The chain is Potassium-transporting ATPase KdpC subunit from Methylorubrum populi (strain ATCC BAA-705 / NCIMB 13946 / BJ001) (Methylobacterium populi).